We begin with the raw amino-acid sequence, 222 residues long: Protein-L-isoaspartate O-methyltransferase (222 aa).

Serine 72 is an active-site residue.

The protein belongs to the methyltransferase superfamily. L-isoaspartyl/D-aspartyl protein methyltransferase family.

Its subcellular location is the cytoplasm. It carries out the reaction [protein]-L-isoaspartate + S-adenosyl-L-methionine = [protein]-L-isoaspartate alpha-methyl ester + S-adenosyl-L-homocysteine. In terms of biological role, catalyzes the methyl esterification of L-isoaspartyl residues in peptides and proteins that result from spontaneous decomposition of normal L-aspartyl and L-asparaginyl residues. It plays a role in the repair and/or degradation of damaged proteins. The protein is Protein-L-isoaspartate O-methyltransferase of Picosynechococcus sp. (strain ATCC 27264 / PCC 7002 / PR-6) (Agmenellum quadruplicatum).